The sequence spans 1235 residues: Structural maintenance of chromosomes protein 1B (1235 aa).

32–39 provides a ligand contact to ATP; that stretch reads GPNGSGKS. A coiled-coil region spans residues 156–490; it reads EEISTSGELI…RSELQNAGID (335 aa). The SMC hinge domain maps to 514–629; it reads SVFGRLFDLC…ETMEEARHIA (116 aa). N6-acetyllysine occurs at positions 648 and 713. Coiled coils occupy residues 666-934, 970-994, and 1022-1049; these read WDEK…LDCK, EKEE…SDQE, and RALE…KEAR. Residue K1033 is modified to N6-acetyllysine.

This sequence belongs to the SMC family. SMC1 subfamily. In terms of assembly, forms a heterodimer with SMC3. Component of a meiosis-specific cohesin complex, probably composed of the SMC1B and SMC3 heterodimer attached via their SMC hinge domain, RAD21 (or its meiosis-specific related protein REC8), which link them, and STAG3, which interacts with RAD21 or REC8. The cohesin complex interacts with the cohesin loading complex subunits NIPBL/Scc2 (via HEAT repeats) and MAU2/Scc4. NIPBL directly contacts all members of the complex, RAD21, SMC1A/B, SMC3 and STAG1.

It localises to the nucleus. It is found in the chromosome. The protein localises to the centromere. Meiosis-specific component of cohesin complex. Required for the maintenance of meiotic cohesion, but not, or only to a minor extent, for its establishment. Contributes to axial element (AE) formation and the organization of chromatin loops along the AE. Plays a key role in synapsis, recombination and chromosome movements. The cohesin complex is required for the cohesion of sister chromatids after DNA replication. The cohesin complex apparently forms a large proteinaceous ring within which sister chromatids can be trapped. At anaphase, the complex is cleaved and dissociates from chromatin, allowing sister chromatids to segregate. The meiosis-specific cohesin complex probably replaces mitosis specific cohesin complex when it dissociates from chromatin during prophase I. This chain is Structural maintenance of chromosomes protein 1B (SMC1B), found in Homo sapiens (Human).